Here is a 164-residue protein sequence, read N- to C-terminus: Glutamate uptake regulatory protein (164 aa).

Residues 5 to 66 (LDDFDIKILD…LLDPQKIGLG (62 aa)) form the HTH asnC-type domain. Residues 24-43 (MAELSEKTGLSANACWRRIR) constitute a DNA-binding region (H-T-H motif).

Functionally, represses the secondary, H(+)-coupled glutamate uptake system (Gluemp) genes. In Zymomonas mobilis subsp. mobilis (strain ATCC 10988 / DSM 424 / LMG 404 / NCIMB 8938 / NRRL B-806 / ZM1), this protein is Glutamate uptake regulatory protein (grp).